A 567-amino-acid chain; its full sequence is 2-succinyl-5-enolpyruvyl-6-hydroxy-3-cyclohexene-1-carboxylate synthase (567 aa).

This sequence belongs to the TPP enzyme family. MenD subfamily. As to quaternary structure, homodimer. Mg(2+) serves as cofactor. It depends on Mn(2+) as a cofactor. The cofactor is thiamine diphosphate.

The enzyme catalyses isochorismate + 2-oxoglutarate + H(+) = 5-enolpyruvoyl-6-hydroxy-2-succinyl-cyclohex-3-ene-1-carboxylate + CO2. Its pathway is quinol/quinone metabolism; 1,4-dihydroxy-2-naphthoate biosynthesis; 1,4-dihydroxy-2-naphthoate from chorismate: step 2/7. It participates in quinol/quinone metabolism; menaquinone biosynthesis. Catalyzes the thiamine diphosphate-dependent decarboxylation of 2-oxoglutarate and the subsequent addition of the resulting succinic semialdehyde-thiamine pyrophosphate anion to isochorismate to yield 2-succinyl-5-enolpyruvyl-6-hydroxy-3-cyclohexene-1-carboxylate (SEPHCHC). This is 2-succinyl-5-enolpyruvyl-6-hydroxy-3-cyclohexene-1-carboxylate synthase from Shewanella loihica (strain ATCC BAA-1088 / PV-4).